The primary structure comprises 299 residues: Putative transposase InsZ (299 aa).

Positions 276–291 are enriched in basic residues; it reads PSRPRSVKISKTRYPV. The disordered stretch occupies residues 276–299; the sequence is PSRPRSVKISKTRYPVKHSAAPLK.

In Escherichia coli (strain K12), this protein is Putative transposase InsZ (insZ).